Here is a 212-residue protein sequence, read N- to C-terminus: MRCLTMPMLLRALAQAQAARAGHASVRGLHSSAVAATYKYVNLREPSMDMKSVTDRAAQTLLWTELIRGLGMTLSYLFREPATINYPFEKGPLSPRFRGEHALRRYPSGEERCIACKLCEAVCPAQAITIEAEPRADGSRRTTRYDIDMTKCIYCGFCQEACPVDAIVEGPNFEFSTETHEELLYNKEKLLNNGDKWEAEIAANIQADYLYR.

A mitochondrion-targeting transit peptide spans 1–36; it reads MRCLTMPMLLRALAQAQAARAGHASVRGLHSSAVAA. 2 consecutive 4Fe-4S ferredoxin-type domains span residues 104–133 and 143–172; these read RRYP…IEAE and TRYD…EGPN. [4Fe-4S] cluster is bound by residues Cys-113, Cys-116, Cys-119, Cys-123, Cys-152, Cys-155, Cys-158, and Cys-162.

Belongs to the complex I 23 kDa subunit family. In terms of assembly, core subunit of respiratory chain NADH dehydrogenase (Complex I) which is composed of 45 different subunits. This is a component of the iron-sulfur (IP) fragment of the enzyme. Interacts with RAB5IF. [4Fe-4S] cluster serves as cofactor.

It is found in the mitochondrion inner membrane. The enzyme catalyses a ubiquinone + NADH + 5 H(+)(in) = a ubiquinol + NAD(+) + 4 H(+)(out). Its function is as follows. Core subunit of the mitochondrial membrane respiratory chain NADH dehydrogenase (Complex I) which catalyzes electron transfer from NADH through the respiratory chain, using ubiquinone as an electron acceptor. Essential for the catalytic activity and assembly of complex I. The chain is NADH dehydrogenase [ubiquinone] iron-sulfur protein 8, mitochondrial (NDUFS8) from Bos taurus (Bovine).